Here is a 715-residue protein sequence, read N- to C-terminus: Fatty acid oxidation complex subunit alpha (715 aa).

The segment at 1–190 (MTTTSAFMLN…KAGLVDDVVP (190 aa)) is enoyl-CoA hydratase. The tract at residues 306–715 (GPLNSVGILG…WTNGETDQGN (410 aa)) is 3-hydroxyacyl-CoA dehydrogenase.

It in the N-terminal section; belongs to the enoyl-CoA hydratase/isomerase family. In the central section; belongs to the 3-hydroxyacyl-CoA dehydrogenase family. In terms of assembly, heterotetramer of two alpha chains (FadJ) and two beta chains (FadI).

It is found in the cytoplasm. It catalyses the reaction a (3S)-3-hydroxyacyl-CoA = a (2E)-enoyl-CoA + H2O. The catalysed reaction is a 4-saturated-(3S)-3-hydroxyacyl-CoA = a (3E)-enoyl-CoA + H2O. The enzyme catalyses a (3S)-3-hydroxyacyl-CoA + NAD(+) = a 3-oxoacyl-CoA + NADH + H(+). It carries out the reaction (3S)-3-hydroxybutanoyl-CoA = (3R)-3-hydroxybutanoyl-CoA. It participates in lipid metabolism; fatty acid beta-oxidation. In terms of biological role, catalyzes the formation of a hydroxyacyl-CoA by addition of water on enoyl-CoA. Also exhibits 3-hydroxyacyl-CoA epimerase and 3-hydroxyacyl-CoA dehydrogenase activities. In Salmonella agona (strain SL483), this protein is Fatty acid oxidation complex subunit alpha.